The following is a 571-amino-acid chain: Proline--tRNA ligase (571 aa).

It belongs to the class-II aminoacyl-tRNA synthetase family. ProS type 1 subfamily. In terms of assembly, homodimer.

It localises to the cytoplasm. The catalysed reaction is tRNA(Pro) + L-proline + ATP = L-prolyl-tRNA(Pro) + AMP + diphosphate. Catalyzes the attachment of proline to tRNA(Pro) in a two-step reaction: proline is first activated by ATP to form Pro-AMP and then transferred to the acceptor end of tRNA(Pro). As ProRS can inadvertently accommodate and process non-cognate amino acids such as alanine and cysteine, to avoid such errors it has two additional distinct editing activities against alanine. One activity is designated as 'pretransfer' editing and involves the tRNA(Pro)-independent hydrolysis of activated Ala-AMP. The other activity is designated 'posttransfer' editing and involves deacylation of mischarged Ala-tRNA(Pro). The misacylated Cys-tRNA(Pro) is not edited by ProRS. This chain is Proline--tRNA ligase, found in Actinobacillus pleuropneumoniae serotype 7 (strain AP76).